A 57-amino-acid polypeptide reads, in one-letter code: uncharacterized protein (57 aa).

The chain crosses the membrane as a helical span at residues 3–23; that stretch reads PLTLLIIIGGVILGNELIISL. The disordered stretch occupies residues 38–57; the sequence is KHKHKTQENYETFASDKKRT.

It localises to the host membrane. This is an uncharacterized protein from Acidianus bottle-shaped virus (isolate Italy/Pozzuoli) (ABV).